A 298-amino-acid chain; its full sequence is GTPase Era (298 aa).

The 169-residue stretch at 8–176 (HCGSVAVIGR…VRDVLKLLPE (169 aa)) folds into the Era-type G domain. The segment at 16–23 (GRPNVGKS) is G1. 16–23 (GRPNVGKS) serves as a coordination point for GTP. A G2 region spans residues 42-46 (QTTRH). Residues 63 to 66 (DTPG) form a G3 region. GTP-binding positions include 63–67 (DTPGL) and 125–128 (NKID). Residues 125–128 (NKID) form a G4 region. The G5 stretch occupies residues 155–157 (ISA). A KH type-2 domain is found at 199–283 (VREQLMRQLG…FLETWVRVRE (85 aa)).

The protein belongs to the TRAFAC class TrmE-Era-EngA-EngB-Septin-like GTPase superfamily. Era GTPase family. As to quaternary structure, monomer.

Its subcellular location is the cytoplasm. The protein localises to the cell inner membrane. An essential GTPase that binds both GDP and GTP, with rapid nucleotide exchange. Plays a role in 16S rRNA processing and 30S ribosomal subunit biogenesis and possibly also in cell cycle regulation and energy metabolism. The sequence is that of GTPase Era from Stenotrophomonas maltophilia (strain K279a).